Here is a 240-residue protein sequence, read N- to C-terminus: Poxin (240 aa).

H46 serves as the catalytic Proton donor. Y181 serves as the catalytic Shared with catalytic histidine of dimeric partner. The active-site Proton acceptor; shared with catalytic histidine of dimeric partner is K185.

It belongs to the poxin family. As to quaternary structure, homodimer.

The enzyme catalyses 2',3'-cGAMP + H2O = Gp(2'-5')Ap(3') + H(+). Its function is as follows. Nuclease that cleaves host 2',3'-cGAMP. This Bombyx mori (Silk moth) protein is Poxin (p26).